The primary structure comprises 446 residues: MENIADLWNSALTELEKKVSKPSYETWLKSTKAHALKKDTLTIIAPNEFARDWLESHYSELISETIYDITGAKLNIRFIIPQSQTEEEVDYPPAKAKKMNDESNHLPQSMLNPKYTFDTFVIGSGNRFAHAASLAVAEAPAKAYNPLFIYGGVGLGKTHLMHAIGHYVIEHNPNAKVVYLSSEKFTNEFINSIRDNKAVDFRNKYRNVDVLLIDDIQFLAGKEQTQEEFFHTFNALHEESKQIVISSDRPPKEIPTLEDRLRSRFEWGLITDITPPDLETRIAILRKKAKAEGLDIPNEVMIYIANQIDSNIRELEGALIRVVAYSSLINKDINADLAAEALKDIIPNSKPKIISIYDIQKAVGDVYQVKLEDFKAKKRTKSVAFPRQIAMYLSRELTDSSLPKIGEEFGGRDHTTVIHAHEKISRLLKTDTQLQKQIEEINDILK.

The tract at residues 1 to 81 is domain I, interacts with DnaA modulators; sequence MENIADLWNS…AKLNIRFIIP (81 aa). The interval 81-109 is domain II; the sequence is PQSQTEEEVDYPPAKAKKMNDESNHLPQS. The tract at residues 110–326 is domain III, AAA+ region; that stretch reads MLNPKYTFDT…GALIRVVAYS (217 aa). The ATP site is built by G154, G156, K157, and T158. Positions 327-446 are domain IV, binds dsDNA; sequence SLINKDINAD…QIEEINDILK (120 aa).

It belongs to the DnaA family. As to quaternary structure, oligomerizes as a right-handed, spiral filament on DNA at oriC.

It localises to the cytoplasm. Plays an essential role in the initiation and regulation of chromosomal replication. ATP-DnaA binds to the origin of replication (oriC) to initiate formation of the DNA replication initiation complex once per cell cycle. Binds the DnaA box (a 9 base pair repeat at the origin) and separates the double-stranded (ds)DNA. Forms a right-handed helical filament on oriC DNA; dsDNA binds to the exterior of the filament while single-stranded (ss)DNA is stabiized in the filament's interior. The ATP-DnaA-oriC complex binds and stabilizes one strand of the AT-rich DNA unwinding element (DUE), permitting loading of DNA polymerase. After initiation quickly degrades to an ADP-DnaA complex that is not apt for DNA replication. Binds acidic phospholipids. This chain is Chromosomal replication initiator protein DnaA, found in Bacillus cytotoxicus (strain DSM 22905 / CIP 110041 / 391-98 / NVH 391-98).